The chain runs to 45 residues: Bomanin Short 2 (45 aa).

Positions 1 to 20 (MKFFSVVTVFVFGLLALANA) are cleaved as a signal peptide. A propeptide spans 21 to 27 (VPLSPDP) (removed by a dipeptidylpeptidase). Residues Cys-36 and Cys-39 are joined by a disulfide bond. Gly-43 is subject to Glycine amide.

As to expression, hemolymph (at protein level).

It is found in the secreted. In terms of biological role, secreted immune-induced peptide induced by Toll signaling. Has a role in resistance to bacterial and fungal infections. The polypeptide is Bomanin Short 2 (Drosophila melanogaster (Fruit fly)).